The chain runs to 272 residues: Putative hydro-lyase BBta_2883 (272 aa).

This sequence belongs to the D-glutamate cyclase family.

The polypeptide is Putative hydro-lyase BBta_2883 (Bradyrhizobium sp. (strain BTAi1 / ATCC BAA-1182)).